The sequence spans 38 residues: Large ribosomal subunit protein bL36 (38 aa).

It belongs to the bacterial ribosomal protein bL36 family.

The sequence is that of Large ribosomal subunit protein bL36 from Karelsulcia muelleri (strain GWSS) (Sulcia muelleri).